The following is a 1430-amino-acid chain: ABC transporter eupT (1430 aa).

The tract at residues 1-26 is disordered; that stretch reads MAPAIDSTVNDLQPNTPNPEKALSSQ. The ABC transporter 1 domain occupies 112 to 368; that stretch reads LALPAMIRQL…FVNLGFECPA (257 aa). N-linked (GlcNAc...) asparagine glycosylation is present at N292. A run of 5 helical transmembrane segments spans residues 476-496, 511-531, 557-577, 586-606, and 620-640; these read WPAVWVMVGNTIMALIMSSLF, VVLFMAILFNAFSSILEVMTL, VLVDMPMKITSTISFNLVFYF, GNFFFYLLVVFLIVLAMSGVF, and MVPASVLMLALLIFTGFVVPV. Residue N684 is glycosylated (N-linked (GlcNAc...) asparagine). Residues 707–727 traverse the membrane as a helical segment; that stretch reads VGIIIAMVIFNYLMYFIASEY. The 244-residue stretch at 789–1032 folds into the ABC transporter 2 domain; sequence FHWNNVCYDL…TLIDYFERNG (244 aa). 825–832 contacts ATP; that stretch reads GVSGAGKT. A glycan (N-linked (GlcNAc...) asparagine) is linked at N1019. 6 consecutive transmembrane segments (helical) span residues 1133-1153, 1213-1233, 1249-1269, 1278-1298, 1305-1325, and 1400-1420; these read ITLCIATSLFIGLVFFNAPLS, LPWSTLASVFMWALFYYPIGF, LMWLLFWQFLVWVSTFTHMCI, GGNIANFLFVLAFFFCGVLAS, FWIFLYRASPLSYWVSAVLST, and FGILWVYIGFNIAAALALYWI.

It belongs to the ABC transporter superfamily. ABCG family. PDR (TC 3.A.1.205) subfamily.

It is found in the cell membrane. Its function is as follows. ABC transporter; part of the gene cluster that mediates the biosynthesis of eupenifeldin, a bistropolone meroterpenoid that acts as an antitumor agent. This Phoma sp protein is ABC transporter eupT.